The following is a 308-amino-acid chain: MDVDTAFLNSTMDEPIYVKQPPGFVNERNPDYVWELYGGMYGLKQAPLLWNEHINNTLKKIGFCRHEGEHGLYFRSTSDGPIYIAVYVDDLLVAAPSPKIYDRVKQELTKLYSMKDLGKVDKFLGLNIHQSSNGDITLSLQDYIAKAASESEINTFKLTQTPLCNSKPLFETTSPHLKDITPYQSIVGQLLFCANTGRPDISYPVSLLSRFLREPRAIHLESARRVLRYLYTTRSMCLKYRSGSQLALTVYCDASHGAIHDLPHSTGGYVTLLAGAPVTWSSKKLKGVIPVPSTEAEYITASETVMEI.

The chain is Putative transposon Ty5-1 protein YCL074W (TY5A) from Saccharomyces cerevisiae (strain ATCC 204508 / S288c) (Baker's yeast).